The chain runs to 20 residues: Pregnancy-associated glycoprotein 60H (20 aa).

N-linked (GlcNAc...) asparagine glycosylation occurs at Asn-4.

Belongs to the peptidase A1 family. As to expression, chorionic epithelium (trophectoderm) and placental cotyledons.

Its subcellular location is the secreted. The protein resides in the extracellular space. The chain is Pregnancy-associated glycoprotein 60H from Bison bonasus (European bison).